The sequence spans 504 residues: ATP synthase subunit alpha (504 aa).

ATP is bound at residue 170 to 177 (GDRQTGKT).

Belongs to the ATPase alpha/beta chains family. As to quaternary structure, F-type ATPases have 2 components, CF(1) - the catalytic core - and CF(0) - the membrane proton channel. CF(1) has five subunits: alpha(3), beta(3), gamma(1), delta(1), epsilon(1). CF(0) has four main subunits: a(1), b(1), b'(1) and c(9-12).

It localises to the cellular thylakoid membrane. It carries out the reaction ATP + H2O + 4 H(+)(in) = ADP + phosphate + 5 H(+)(out). Produces ATP from ADP in the presence of a proton gradient across the membrane. The alpha chain is a regulatory subunit. The chain is ATP synthase subunit alpha from Prochlorococcus marinus (strain NATL2A).